We begin with the raw amino-acid sequence, 432 residues long: Enolase (432 aa).

Gln-168 serves as a coordination point for (2R)-2-phosphoglycerate. The active-site Proton donor is Glu-210. Mg(2+) contacts are provided by Asp-247, Glu-288, and Asp-315. (2R)-2-phosphoglycerate contacts are provided by Lys-340, Arg-369, Ser-370, and Lys-391. Lys-340 serves as the catalytic Proton acceptor.

Belongs to the enolase family. Mg(2+) serves as cofactor.

It is found in the cytoplasm. Its subcellular location is the secreted. It localises to the cell surface. The catalysed reaction is (2R)-2-phosphoglycerate = phosphoenolpyruvate + H2O. It participates in carbohydrate degradation; glycolysis; pyruvate from D-glyceraldehyde 3-phosphate: step 4/5. In terms of biological role, catalyzes the reversible conversion of 2-phosphoglycerate (2-PG) into phosphoenolpyruvate (PEP). It is essential for the degradation of carbohydrates via glycolysis. This chain is Enolase, found in Microcystis aeruginosa (strain NIES-843 / IAM M-2473).